We begin with the raw amino-acid sequence, 182 residues long: Methionine-R-sulfoxide reductase B2, mitochondrial (182 aa).

The N-terminal 20 residues, 1-20, are a transit peptide targeting the mitochondrion; the sequence is MARLLWLLRGLTLGTAPRRA. The MsrB domain maps to 51–180; the sequence is KSEWQKKLTP…NSVALKFKPR (130 aa). Zn(2+)-binding residues include Cys-90, Cys-93, Cys-146, and Cys-149. The active-site Nucleophile is Cys-169.

This sequence belongs to the MsrB Met sulfoxide reductase family. In terms of assembly, interacts with DAOA; the interaction is direct. It depends on Zn(2+) as a cofactor. In terms of tissue distribution, ubiquitous. Detected in retina, ocular ciliary body, skeletal muscle, heart, colon, bone marrow, cerebellum, small intestine, fetal brain, fetal liver, kidney, spinal cord, lung, placenta and prostate.

It is found in the mitochondrion. It carries out the reaction L-methionyl-[protein] + [thioredoxin]-disulfide + H2O = L-methionyl-(R)-S-oxide-[protein] + [thioredoxin]-dithiol. The enzyme catalyses [thioredoxin]-disulfide + L-methionine + H2O = L-methionine (R)-S-oxide + [thioredoxin]-dithiol. Functionally, methionine-sulfoxide reductase that specifically reduces methionine (R)-sulfoxide back to methionine. While in many cases, methionine oxidation is the result of random oxidation following oxidative stress, methionine oxidation is also a post-translational modification that takes place on specific residue. Upon oxidative stress, may play a role in the preservation of mitochondrial integrity by decreasing the intracellular reactive oxygen species build-up through its scavenging role, hence contributing to cell survival and protein maintenance. The protein is Methionine-R-sulfoxide reductase B2, mitochondrial (MSRB2) of Homo sapiens (Human).